We begin with the raw amino-acid sequence, 98 residues long: Co-chaperonin GroES (98 aa).

It belongs to the GroES chaperonin family. In terms of assembly, heptamer of 7 subunits arranged in a ring. Interacts with the chaperonin GroEL.

It localises to the cytoplasm. Its function is as follows. Together with the chaperonin GroEL, plays an essential role in assisting protein folding. The GroEL-GroES system forms a nano-cage that allows encapsulation of the non-native substrate proteins and provides a physical environment optimized to promote and accelerate protein folding. GroES binds to the apical surface of the GroEL ring, thereby capping the opening of the GroEL channel. The protein is Co-chaperonin GroES of Paenarthrobacter aurescens (strain TC1).